The chain runs to 928 residues: cGMP-dependent 3',5'-cyclic phosphodiesterase (928 aa).

At Ser-109 the chain carries Phosphoserine. Residues 188–210 are disordered; the sequence is RRPEAVQNTSADPSEDQKDEKGY. GAF domains are found at residues 228–365 and 397–536; these read DATS…GTVL and DVSV…GISI. 3',5'-cyclic GMP contacts are provided by Ser-419, Asp-434, Ile-453, Tyr-476, and Thr-487. The region spanning 566–890 is the PDEase domain; the sequence is SDDEYTKLLH…EHWTKVSHKF (325 aa). Residue His-644 is the Proton donor of the active site. Zn(2+)-binding residues include His-648, His-684, Asp-685, and Asp-796. Asp-685 serves as a coordination point for Mg(2+).

The protein belongs to the cyclic nucleotide phosphodiesterase family. PDE2 subfamily. Homodimer. Zn(2+) is required as a cofactor. Requires Mg(2+) as cofactor. Expressed in brain and liver.

The protein resides in the cell membrane. Its subcellular location is the cytoplasm. The protein localises to the mitochondrion matrix. It is found in the mitochondrion inner membrane. It localises to the mitochondrion outer membrane. It catalyses the reaction a nucleoside 3',5'-cyclic phosphate + H2O = a nucleoside 5'-phosphate + H(+). It carries out the reaction 3',5'-cyclic GMP + H2O = GMP + H(+). The catalysed reaction is 3',5'-cyclic AMP + H2O = AMP + H(+). Its activity is regulated as follows. The 3',5'-cyclic-AMP phosphodiesterase activity is stimulated by 3',5'-cyclic GMP. Specifically inhibited by Bay 60-7550. When repressed, protected from ionomycin- but not staurosporin-induced cell death. CGMP-activated cyclic nucleotide phosphodiesterase with a dual-specificity for the second messengers cAMP and cGMP, which are key regulators of many important physiological processes. Has a higher efficiency with cGMP compared to cAMP. Plays a role in cell growth and migration. In terms of biological role, regulates mitochondrial cAMP levels and respiration. Involved in the regulation of mitochondria morphology/dynamics and apoptotic cell death via local modulation of cAMP/PKA signaling in the mitochondrion, including the monitoring of local cAMP levels at the outer mitochondrial membrane and of PKA-dependent phosphorylation of Dnm1l. This chain is cGMP-dependent 3',5'-cyclic phosphodiesterase, found in Rattus norvegicus (Rat).